A 71-amino-acid chain; its full sequence is uncharacterized protein (71 aa).

This is an uncharacterized protein from Cassava vein mosaic virus (CsVMV).